Here is a 220-residue protein sequence, read N- to C-terminus: Chaperone protein TorD (220 aa).

Belongs to the TorD/DmsD family. TorD subfamily.

The protein localises to the cytoplasm. Its function is as follows. Involved in the biogenesis of TorA. Acts on TorA before the insertion of the molybdenum cofactor and, as a result, probably favors a conformation of the apoenzyme that is competent for acquiring the cofactor. The sequence is that of Chaperone protein TorD from Vibrio cholerae serotype O1 (strain ATCC 39315 / El Tor Inaba N16961).